The sequence spans 403 residues: Dynactin subunit 2 (403 aa).

A disordered region spans residues methionine 1–proline 26. N-acetylalanine is present on alanine 2. Tyrosine 6 carries the phosphotyrosine modification. Residue serine 83 is modified to Phosphoserine. The residue at position 86 (tyrosine 86) is a Phosphotyrosine. Residues glutamine 100–glutamate 130 adopt a coiled-coil conformation. Phosphothreonine is present on residues threonine 134 and threonine 200. Residues threonine 184–serine 204 are disordered. Residues glutamate 216–asparagine 248 adopt a coiled-coil conformation. At serine 322 the chain carries Phosphoserine.

This sequence belongs to the dynactin subunit 2 family. Subunit of dynactin, a multiprotein complex part of a tripartite complex with dynein and a adapter, such as BICDL1, BICD2 or HOOK3. The dynactin complex is built around ACTR1A/ACTB filament and consists of an actin-related filament composed of a shoulder domain, a pointed end and a barbed end. Its length is defined by its flexible shoulder domain. The soulder is composed of 2 DCTN1 subunits, 4 DCTN2 and 2 DCTN3. The 4 DCNT2 (via N-terminus) bind the ACTR1A filament and act as molecular rulers to determine the length. The pointed end is important for binding dynein-dynactin cargo adapters and consists of 4 subunits: ACTR10, DCNT4, DCTN5 and DCTN6. The barbed end is composed of a CAPZA1:CAPZB heterodimers, which binds ACTR1A/ACTB filament and dynactin and stabilizes dynactin. Interacts with BICD2 and CEP135. Interacts with DYNAP. Interacts with ECPAS. Interacts with MAPRE1.

Its subcellular location is the cytoplasm. It is found in the cytoskeleton. The protein localises to the microtubule organizing center. The protein resides in the centrosome. It localises to the membrane. In terms of biological role, part of the dynactin complex that activates the molecular motor dynein for ultra-processive transport along microtubules. In the dynactin soulder domain, binds the ACTR1A filament and acts as a molecular ruler to determine the length. Modulates cytoplasmic dynein binding to an organelle, and plays a role in prometaphase chromosome alignment and spindle organization during mitosis. Involved in anchoring microtubules to centrosomes. May play a role in synapse formation during brain development. This is Dynactin subunit 2 (DCTN2) from Bos taurus (Bovine).